We begin with the raw amino-acid sequence, 462 residues long: Centrosomal protein of 55 kDa (462 aa).

A compositionally biased stretch (basic and acidic residues) spans 1 to 11 (MSSRSPKDLIK). Positions 1 to 26 (MSSRSPKDLIKSKWGSRPSSSKSDTA) are disordered. The segment covering 12–23 (SKWGSRPSSSKS) has biased composition (low complexity). The stretch at 50–400 (KMAEKGRSRL…TQLESLKQLH (351 aa)) forms a coiled coil. 2 positions are modified to phosphoserine: Ser96 and Ser99. Residues 157–235 (ANCFNSSMNS…EGYLQVEKQK (79 aa)) form an interaction with TSG101 region. The tract at residues 160–214 (FNSSMNSIHEKEMQLKDALEKNQQWLVYDQQREAYVKGLLAKIFELEKRTETAAA) is interaction with PDCD6IP. Positions 354 to 462 (QMQACTLDFE…LLVHVEYCMK (109 aa)) are required for localization to the interphase centrosome and to the midbody during cytokinesis. A disordered region spans residues 410–430 (PLQREPESRVKATSPKSPSAA). Ser423, Ser426, and Ser428 each carry phosphoserine. A Phosphoserine; by PLK1 modification is found at Ser434.

As to quaternary structure, homodimer. Interacts (phosphorylated on Ser-423 and Ser-426) with PLK1; the interaction is indirect via the MTMR3:MTMR4 heterooligomer, occurs during early mitosis, regulates the phosphorylation of CEP55 by PLK1 and its recruitment to the midbody where it can mediate cell abscission. Interacts with AKAP9/CG-NAP; the interaction occurs in interphase and is lost upon mitotic entry. Interacts with PCNT/Kendrin; the interaction occurs in interphase and is lost upon mitotic entry. Directly interacts with PDCD6IP; this interaction is required for PDCD6IP targeting to the midbody; CEP55 binds PDCD6IP in a 2:1 stoichiometry; PDCD6IP competes with TSG101 for the same binding site. Interacts with TSG101; TSG101 competes with PDCD6IP for the same binding site; interaction is required for cytokinesis. Interacts with MVB12A, VPS37B, VPS37C and VPS28. In terms of processing, there is a hierachy of phosphorylation, where both Ser-423 and Ser-426 are phosphorylated at the onset of mitosis, prior to Ser-434. Phosphorylation at Ser-423 and Ser-426 is required for dissociation from the centrosome at the G2/M boundary. Phosphorylation at the 3 sites, Ser-423, Ser-426 and Ser-434, is required for protein function at the final stages of cell division to complete cytokinesis successfully.

The protein localises to the cytoplasm. It is found in the cytoskeleton. Its subcellular location is the microtubule organizing center. The protein resides in the centrosome. It localises to the centriole. The protein localises to the cleavage furrow. It is found in the midbody. Its subcellular location is the midbody ring. In terms of biological role, plays a role in mitotic exit and cytokinesis. Recruits PDCD6IP and TSG101 to midbody during cytokinesis. Required for successful completion of cytokinesis. Not required for microtubule nucleation. Plays a role in the development of the brain and kidney. The sequence is that of Centrosomal protein of 55 kDa from Mus musculus (Mouse).